Here is a 139-residue protein sequence, read N- to C-terminus: Interleukin-5 (139 aa).

Positions 1–19 (MMKILVCLPLLTLYAGCVY) are cleaved as a signal peptide. N-linked (GlcNAc...) asparagine glycosylation is found at N48, N77, and N91.

This sequence belongs to the IL-5 family. Homodimer; disulfide-linked. Interacts with IL5RA. Interacts with CSF2RB.

It is found in the secreted. In terms of biological role, homodimeric cytokine expressed predominantly by T-lymphocytes and NK cells that plays an important role in the survival, differentiation, and chemotaxis of eosinophils. Also acts on activated and resting B-cells to induce immunoglobulin production, growth, and differentiation. Mechanistically, exerts its biological effects through a receptor composed of IL5RA subunit and the cytokine receptor common subunit beta/CSF2RB. Binding to the receptor leads to activation of various kinases including LYN, SYK and JAK2 and thereby propagates signals through the RAS-MAPK and JAK-STAT5 pathways respectively. The sequence is that of Interleukin-5 (IL5) from Notamacropus eugenii (Tammar wallaby).